Here is a 95-residue protein sequence, read N- to C-terminus: uncharacterized protein (95 aa).

This is an uncharacterized protein from Human adenovirus B serotype 7 (HAdV-7).